Consider the following 101-residue polypeptide: Urease subunit beta (101 aa).

The protein belongs to the urease beta subunit family. As to quaternary structure, heterotrimer of UreA (gamma), UreB (beta) and UreC (alpha) subunits. Three heterotrimers associate to form the active enzyme.

Its subcellular location is the cytoplasm. The enzyme catalyses urea + 2 H2O + H(+) = hydrogencarbonate + 2 NH4(+). The protein operates within nitrogen metabolism; urea degradation; CO(2) and NH(3) from urea (urease route): step 1/1. This is Urease subunit beta from Dinoroseobacter shibae (strain DSM 16493 / NCIMB 14021 / DFL 12).